Reading from the N-terminus, the 498-residue chain is Phosphoethanolamine N-methyltransferase 1 (498 aa).

Positions 68, 73, 89, 115, 116, and 134 each coordinate S-adenosyl-L-homocysteine. The phosphocholine site is built by serine 167, serine 172, glycine 173, arginine 177, and tyrosine 184. N-methylethanolamine phosphate is bound by residues 253-254 and tyrosine 262; that span reads QY. Tyrosine 262 contacts phosphocholine. S-adenosyl-L-homocysteine contacts are provided by valine 271, serine 272, glycine 298, aspartate 320, aspartate 346, cysteine 347, and arginine 363. Phosphocholine contacts are provided by tyrosine 394, tyrosine 408, arginine 412, tyrosine 414, and lysine 480. N-methylethanolamine phosphate is bound by residues tyrosine 394, tyrosine 408, 412–414, and lysine 480; that span reads RGY.

Belongs to the class I-like SAM-binding methyltransferase superfamily. PEAMT family.

The catalysed reaction is phosphoethanolamine + S-adenosyl-L-methionine = N-methylethanolamine phosphate + S-adenosyl-L-homocysteine + H(+). The enzyme catalyses N-methylethanolamine phosphate + S-adenosyl-L-methionine = N,N-dimethylethanolamine phosphate + S-adenosyl-L-homocysteine + H(+). It carries out the reaction N,N-dimethylethanolamine phosphate + S-adenosyl-L-methionine = phosphocholine + S-adenosyl-L-homocysteine + H(+). The protein operates within phospholipid metabolism; phosphatidylcholine biosynthesis; phosphocholine from phosphoethanolamine: step 1/1. Inhibited by phosphatidic acid. Involved in phosphocholine biosynthesis. Catalyzes the N-methylation of phosphoethanolamine, phosphomonomethylethanolamine and phosphodimethylethanolamine, the three methylation steps required to convert phosphoethanolamine to phosphocholine (PC). The sequence is that of Phosphoethanolamine N-methyltransferase 1 from Triticum aestivum (Wheat).